Reading from the N-terminus, the 165-residue chain is Ribosome maturation factor RimM (165 aa).

The PRC barrel domain maps to 90 to 161 (PDTYYVSDLK…KIIIKPVGEW (72 aa)).

Belongs to the RimM family. As to quaternary structure, binds ribosomal protein uS19.

The protein localises to the cytoplasm. Functionally, an accessory protein needed during the final step in the assembly of 30S ribosomal subunit, possibly for assembly of the head region. Essential for efficient processing of 16S rRNA. May be needed both before and after RbfA during the maturation of 16S rRNA. It has affinity for free ribosomal 30S subunits but not for 70S ribosomes. In Clostridium beijerinckii (strain ATCC 51743 / NCIMB 8052) (Clostridium acetobutylicum), this protein is Ribosome maturation factor RimM.